The chain runs to 178 residues: tRNA (cytidine(56)-2'-O)-methyltransferase (178 aa).

Residue L88 participates in S-adenosyl-L-methionine binding.

Belongs to the aTrm56 family. Homodimer.

It is found in the cytoplasm. The enzyme catalyses cytidine(56) in tRNA + S-adenosyl-L-methionine = 2'-O-methylcytidine(56) in tRNA + S-adenosyl-L-homocysteine + H(+). Specifically catalyzes the AdoMet-dependent 2'-O-ribose methylation of cytidine at position 56 in tRNAs. The protein is tRNA (cytidine(56)-2'-O)-methyltransferase of Methanopyrus kandleri (strain AV19 / DSM 6324 / JCM 9639 / NBRC 100938).